The primary structure comprises 203 residues: Holliday junction branch migration complex subunit RuvA (203 aa).

The segment at 1–63 (MYEYLKGLVT…DTDITLFGFY (63 aa)) is domain I. The segment at 64–142 (DLDEKQLFQK…DLEQSATLVG (79 aa)) is domain II. Residues 143–153 (QTAIDLGSQGD) are flexible linker. Positions 153-203 (DSPELSDALAALSALGYSAREVKAITPKLTDFAAQTTDQYLREGLRLLMKK) are domain III.

It belongs to the RuvA family. As to quaternary structure, homotetramer. Forms an RuvA(8)-RuvB(12)-Holliday junction (HJ) complex. HJ DNA is sandwiched between 2 RuvA tetramers; dsDNA enters through RuvA and exits via RuvB. An RuvB hexamer assembles on each DNA strand where it exits the tetramer. Each RuvB hexamer is contacted by two RuvA subunits (via domain III) on 2 adjacent RuvB subunits; this complex drives branch migration. In the full resolvosome a probable DNA-RuvA(4)-RuvB(12)-RuvC(2) complex forms which resolves the HJ.

Its subcellular location is the cytoplasm. The RuvA-RuvB-RuvC complex processes Holliday junction (HJ) DNA during genetic recombination and DNA repair, while the RuvA-RuvB complex plays an important role in the rescue of blocked DNA replication forks via replication fork reversal (RFR). RuvA specifically binds to HJ cruciform DNA, conferring on it an open structure. The RuvB hexamer acts as an ATP-dependent pump, pulling dsDNA into and through the RuvAB complex. HJ branch migration allows RuvC to scan DNA until it finds its consensus sequence, where it cleaves and resolves the cruciform DNA. The chain is Holliday junction branch migration complex subunit RuvA from Latilactobacillus sakei subsp. sakei (strain 23K) (Lactobacillus sakei subsp. sakei).